Here is a 214-residue protein sequence, read N- to C-terminus: ER lumen protein-retaining receptor 3 (214 aa).

Topologically, residues 1–4 (MNVF) are lumenal. Residues 5 to 24 (RILGDLSHLLAMILLLVKIW) traverse the membrane as a helical segment. Residues 25–32 (RSKSCAGI) are Cytoplasmic-facing. The helical transmembrane segment at 33–52 (SGKSQILFALVFTTRYLDLF) threads the bilayer. An interaction with the K-D-E-L motif on target proteins region spans residues 47–48 (RY). Over 53–58 (SNFISI) the chain is Lumenal. A helical membrane pass occupies residues 59 to 79 (YNTVMKVVFLLCAYVTVYMIY). Residues 80–92 (WKFRKTFDIENDT) are Cytoplasmic-facing. Residues 93-110 (FRLEFLLVPVTGLSFLVN) traverse the membrane as a helical segment. The Lumenal portion of the chain corresponds to 111 to 116 (YSYTPM). Residues 117-135 (EVLWTFSIYLESVAILPQL) form a helical membrane-spanning segment. The Cytoplasmic segment spans residues 136–149 (FMISKTGEAETITT). The helical transmembrane segment at 150 to 168 (HYLFFLGLYRLLYLANWIR) threads the bilayer. The interaction with the K-D-E-L motif on target proteins stretch occupies residues 159–169 (RLLYLANWIRR). Residues 169–178 (RYQTENFYDQ) are Lumenal-facing. The helical transmembrane segment at 179–199 (ISVVSGVVQTIFYCDFFYLYV) threads the bilayer. Residues 200-214 (TKVLKGKKLSLPVPV) lie on the Cytoplasmic side of the membrane. The interval 204-207 (KGKK) is important for recycling of cargo proteins with the sequence motif K-D-E-L from the Golgi to the endoplasmic reticulum.

It belongs to the ERD2 family.

It localises to the endoplasmic reticulum membrane. The protein localises to the golgi apparatus membrane. It is found in the cytoplasmic vesicle. Its subcellular location is the COPI-coated vesicle membrane. In terms of biological role, receptor for the C-terminal sequence motif K-D-E-L that is present on endoplasmic reticulum resident proteins and that mediates their recycling from the Golgi back to the endoplasmic reticulum. This Mus musculus (Mouse) protein is ER lumen protein-retaining receptor 3 (Kdelr3).